A 278-amino-acid polypeptide reads, in one-letter code: Large ribosomal subunit protein uL2 (278 aa).

The disordered stretch occupies residues 226–278 (NPIDHPHGGGEGRTSGGRHPVTPWGKPTKGKKTRSNKSTDKFILISRHKRKKK).

Belongs to the universal ribosomal protein uL2 family. As to quaternary structure, part of the 50S ribosomal subunit. Forms a bridge to the 30S subunit in the 70S ribosome.

Its function is as follows. One of the primary rRNA binding proteins. Required for association of the 30S and 50S subunits to form the 70S ribosome, for tRNA binding and peptide bond formation. It has been suggested to have peptidyltransferase activity; this is somewhat controversial. Makes several contacts with the 16S rRNA in the 70S ribosome. The protein is Large ribosomal subunit protein uL2 of Rhodopseudomonas palustris (strain HaA2).